A 359-amino-acid polypeptide reads, in one-letter code: WD repeat-containing protein 89 homolog (359 aa).

6 WD repeats span residues 23–62 (IGDD…ILNV), 65–104 (GHKD…CSQT), 106–144 (NQQG…RKFD), 146–186 (SHTE…DDDA), 192–232 (NAED…KIKH), and 294–333 (VHTD…TNIL).

This chain is WD repeat-containing protein 89 homolog (wdr89), found in Dictyostelium discoideum (Social amoeba).